The primary structure comprises 133 residues: Protein msa (133 aa).

4 helical membrane-spanning segments follow: residues 3 to 23, 27 to 47, 55 to 75, and 103 to 123; these read YLILSLVANLLVFGVLSAIGL, ILAAMMMILVIPITISGILFF, YIFFNILFIDFYYYIYNVHLM, and FGFDEILFFTLYLLLILIILY.

The protein localises to the cell membrane. In terms of biological role, accessory element involved in the expression of sarA and several virulence factors. Modulates SarA production and/or function in a strain-dependent manner. Affects the transcription of the accessory gene regulator (agr) and genes encoding virulence factors including alpha toxin (hla) and protein A (spa). This Staphylococcus aureus (strain bovine RF122 / ET3-1) protein is Protein msa (msa).